The chain runs to 189 residues: Elongation factor P (189 aa).

Belongs to the elongation factor P family.

The protein resides in the cytoplasm. It functions in the pathway protein biosynthesis; polypeptide chain elongation. Its function is as follows. Involved in peptide bond synthesis. Stimulates efficient translation and peptide-bond synthesis on native or reconstituted 70S ribosomes in vitro. Probably functions indirectly by altering the affinity of the ribosome for aminoacyl-tRNA, thus increasing their reactivity as acceptors for peptidyl transferase. This Ehrlichia canis (strain Jake) protein is Elongation factor P.